Reading from the N-terminus, the 407-residue chain is Peptidase T (407 aa).

Residue His-82 participates in Zn(2+) binding. Residue Asp-84 is part of the active site. A Zn(2+)-binding site is contributed by Asp-143. Glu-177 acts as the Proton acceptor in catalysis. Positions 178, 200, and 382 each coordinate Zn(2+).

Belongs to the peptidase M20B family. The cofactor is Zn(2+).

It is found in the cytoplasm. It catalyses the reaction Release of the N-terminal residue from a tripeptide.. Cleaves the N-terminal amino acid of tripeptides. This Streptococcus pyogenes serotype M28 (strain MGAS6180) protein is Peptidase T.